A 429-amino-acid polypeptide reads, in one-letter code: Actin-like protein 6A (429 aa).

N-acetylserine is present on S2. Residue K62 forms a Glycyl lysine isopeptide (Lys-Gly) (interchain with G-Cter in SUMO2) linkage. 2 positions are modified to phosphoserine: S86 and S233.

It belongs to the actin family. Component of numerous complexes with chromatin remodeling and histone acetyltransferase activity. Component of the NuA4 histone acetyltransferase complex which contains the catalytic subunit KAT5/TIP60 and the subunits EP400, TRRAP/PAF400, BRD8/SMAP, EPC1, DMAP1/DNMAP1, RUVBL1/TIP49, RUVBL2, ING3, actin, ACTL6A/BAF53A, MORF4L1/MRG15, MORF4L2/MRGX, MRGBP, YEATS4/GAS41, VPS72/YL1 and MEAF6. The NuA4 complex interacts with MYC and the adenovirus E1A protein. Component of a NuA4-related complex which contains EP400, TRRAP/PAF400, SRCAP, BRD8/SMAP, EPC1, DMAP1/DNMAP1, RUVBL1/TIP49, RUVBL2, actin, ACTL6A/BAF53A, VPS72 and YEATS4/GAS41. Component of the multiprotein chromatin-remodeling complexes SWI/SNF: SWI/SNF-A (BAF), SWI/SNF-B (PBAF) and related complexes. The canonical complex contains a catalytic subunit (either SMARCA4/BRG1/BAF190A or SMARCA2/BRM/BAF190B) and at least SMARCE1, ACTL6A/BAF53, SMARCC1/BAF155, SMARCC2/BAF170, and SMARCB1/SNF5/BAF47. Other subunits specific to each of the complexes may also be present permitting several possible combinations developmentally and tissue specific. Component of the BAF complex, which includes at least actin (ACTB), ARID1A/BAF250A, ARID1B/BAF250B, SMARCA2/BRM, SMARCA4/BRG1/BAF190A, ACTL6A/BAF53, ACTL6B/BAF53B, SMARCE1/BAF57, SMARCC1/BAF155, SMARCC2/BAF170, SMARCB1/SNF5/INI1, and one or more SMARCD1/BAF60A, SMARCD2/BAF60B, or SMARCD3/BAF60C. In muscle cells, the BAF complex also contains DPF3. Component of the BAF53 complex, at least composed of ACTL6A/BAF53A, RUVBL1/TIP49, SMARCA2/BRM/BAF190B and TRRAP/PAF400, and which may also include a HAT activity related to, but distinct from, that of KAT5. Component of neural progenitors-specific chromatin remodeling complex (npBAF complex) composed of at least, ARID1A/BAF250A or ARID1B/BAF250B, SMARCD1/BAF60A, SMARCD3/BAF60C, SMARCA2/BRM/BAF190B, SMARCA4/BRG1/BAF190A, SMARCB1/BAF47, SMARCC1/BAF155, SMARCE1/BAF57, SMARCC2/BAF170, PHF10/BAF45A, ACTL6A/BAF53A and actin. Component of SWI/SNF (GBAF) subcomplex, which includes at least BICRA or BICRAL (mutually exclusive), BRD9, SS18, SMARCA2/BRM, SMARCA4/BRG1/BAF190A, ACTL6A/BAF53, SMARCC1/BAF155, and SMARCD1/BAF60A. May be a component of the SWI/SNF-B (PBAF) chromatin remodeling complex, at least composed of SMARCA4/BRG1, SMARCB1/BAF47/SNF5, ACTL6A/BAF53A or ACTL6B/BAF53B, SMARCE1/BAF57, SMARCD1/BAF60A, SMARCD2/BAF60B, perhaps SMARCD3/BAF60C, SMARCC1/BAF155, SMARCC2/BAF170, PBRM1/BAF180, ARID2/BAF200 and actin. Interacts with SMARCA4/BRG1/BAF190A. Interacts with PHF10/BAF45A. Component of the chromatin remodeling INO80 complex; specifically part of a complex module associated with the DBINO domain of INO80. Interacts with DPF2. In terms of tissue distribution, widely expressed. Expressed selectively in neural stem and progenitor cells (at protein level).

The protein localises to the nucleus. In terms of biological role, involved in transcriptional activation and repression of select genes by chromatin remodeling (alteration of DNA-nucleosome topology). Component of SWI/SNF chromatin remodeling complexes that carry out key enzymatic activities, changing chromatin structure by altering DNA-histone contacts within a nucleosome in an ATP-dependent manner. Required for maximal ATPase activity of SMARCA4/BRG1/BAF190A and for association of the SMARCA4/BRG1/BAF190A containing remodeling complex BAF with chromatin/nuclear matrix. Belongs to the neural progenitors-specific chromatin remodeling complex (npBAF complex) and is required for the proliferation of neural progenitors. During neural development a switch from a stem/progenitor to a postmitotic chromatin remodeling mechanism occurs as neurons exit the cell cycle and become committed to their adult state. The transition from proliferating neural stem/progenitor cells to postmitotic neurons requires a switch in subunit composition of the npBAF and nBAF complexes. As neural progenitors exit mitosis and differentiate into neurons, npBAF complexes which contain ACTL6A/BAF53A and PHF10/BAF45A, are exchanged for homologous alternative ACTL6B/BAF53B and DPF1/BAF45B or DPF3/BAF45C subunits in neuron-specific complexes (nBAF). The npBAF complex is essential for the self-renewal/proliferative capacity of the multipotent neural stem cells. The nBAF complex along with CREST plays a role regulating the activity of genes essential for dendrite growth. Component of the NuA4 histone acetyltransferase (HAT) complex which is involved in transcriptional activation of select genes principally by acetylation of nucleosomal histones H4 and H2A. This modification may both alter nucleosome - DNA interactions and promote interaction of the modified histones with other proteins which positively regulate transcription. This complex may be required for the activation of transcriptional programs associated with oncogene and proto-oncogene mediated growth induction, tumor suppressor mediated growth arrest and replicative senescence, apoptosis, and DNA repair. NuA4 may also play a direct role in DNA repair when recruited to sites of DNA damage. Putative core component of the chromatin remodeling INO80 complex which is involved in transcriptional regulation, DNA replication and probably DNA repair. The protein is Actin-like protein 6A (Actl6a) of Mus musculus (Mouse).